We begin with the raw amino-acid sequence, 386 residues long: MAYFKAVAYLAALASAAAFNPGSSFVPRLNAPATQPKAAKMTGPTMQAVPCGINGFGRIGRLVARIMIKDPETKLLQVNAGSATPDYMAYQFKYDSIHGRYQGDVVVDGDDLVIDGQRVITTRARDPKDIGWAKTGVEYLCESTGVFLTAEKAQPHIDAGVKKVIFSAPAKDDSLTVVMGVNAEDYKGQTDFISCASCTTNGLAPLVKCINDKWGIEEGLMTTIHAMTATQAVVDSSSRKDWRGGRAASGNIIPSSTGAAKAVAKVIPAVKGKLTGMAFRVPTIDVSVVDLTCRLAKDATYEEICAEVKRRANGDMKGFLGYTDEPLVSTDFETEPISSTFDAEAGISLNPRFVKLVAWYDNEWGYSNRVKDLMVHVAKVDAKVKA.

The N-terminal 45 residues, 1-45 (MAYFKAVAYLAALASAAAFNPGSSFVPRLNAPATQPKAAKMTGPT), are a transit peptide targeting the chloroplast. Residues 58 to 59 (RI) and Arg125 contribute to the NADP(+) site. D-glyceraldehyde 3-phosphate is bound by residues 197–199 (SCT), Thr228, 257–258 (TG), and Arg280. Cys198 (nucleophile) is an active-site residue. Asn362 serves as a coordination point for NADP(+).

This sequence belongs to the glyceraldehyde-3-phosphate dehydrogenase family. As to quaternary structure, homotetramer.

The protein resides in the plastid. It is found in the chloroplast. It carries out the reaction D-glyceraldehyde 3-phosphate + phosphate + NADP(+) = (2R)-3-phospho-glyceroyl phosphate + NADPH + H(+). It catalyses the reaction D-glyceraldehyde 3-phosphate + phosphate + NAD(+) = (2R)-3-phospho-glyceroyl phosphate + NADH + H(+). The protein operates within carbohydrate biosynthesis; Calvin cycle. The polypeptide is Glyceraldehyde-3-phosphate dehydrogenase, chloroplastic (GAPC1) (Guillardia theta (Cryptophyte)).